Consider the following 347-residue polypeptide: Leucine-rich repeat-containing protein 69 (347 aa).

LRR repeat units lie at residues Asn-15–Pro-37, Asn-38–Thr-60, Gln-61–Leu-82, Ser-84–Gly-105, Arg-108–Leu-129, Ser-131–Leu-152, His-154–Leu-175, Asn-177–Leu-198, and Lys-200–Arg-222.

Belongs to the LRRC69 family.

The sequence is that of Leucine-rich repeat-containing protein 69 (Lrrc69) from Mus musculus (Mouse).